We begin with the raw amino-acid sequence, 55 residues long: Caltrin-like protein 2 (55 aa).

Residues 7 to 55 (AINRPGSCPRVMIYCPARHPPNKCTSDYDCPKPQKCCPGYCGKQCYQPE) form the WAP domain.

Post-translationally, glycosylated.

Its function is as follows. Inhibits calcium transport into spermatozoa. The polypeptide is Caltrin-like protein 2 (Cavia porcellus (Guinea pig)).